The sequence spans 256 residues: Flap endonuclease Xni (256 aa).

Residue aspartate 105 coordinates Mg(2+). The 5'-3' exonuclease domain maps to 164–250 (SQFIDFLAMA…LNTRLANFRV (87 aa)). The K(+) site is built by methionine 172, alanine 173, proline 181, isoleucine 183, and isoleucine 186. The tract at residues 185–190 (GIGPKS) is interaction with DNA.

The protein belongs to the Xni family. Mg(2+) is required as a cofactor. Requires K(+) as cofactor.

In terms of biological role, has flap endonuclease activity. During DNA replication, flap endonucleases cleave the 5'-overhanging flap structure that is generated by displacement synthesis when DNA polymerase encounters the 5'-end of a downstream Okazaki fragment. The polypeptide is Flap endonuclease Xni (Shewanella loihica (strain ATCC BAA-1088 / PV-4)).